The following is a 164-amino-acid chain: UPF0304 protein YE1336 (164 aa).

This sequence belongs to the UPF0304 family.

The protein is UPF0304 protein YE1336 of Yersinia enterocolitica serotype O:8 / biotype 1B (strain NCTC 13174 / 8081).